The primary structure comprises 40 residues: Photosystem II reaction center protein J (40 aa).

The chain crosses the membrane as a helical span at residues Ile8–Phe28.

Belongs to the PsbJ family. PSII is composed of 1 copy each of membrane proteins PsbA, PsbB, PsbC, PsbD, PsbE, PsbF, PsbH, PsbI, PsbJ, PsbK, PsbL, PsbM, PsbT, PsbX, PsbY, PsbZ, Psb30/Ycf12, at least 3 peripheral proteins of the oxygen-evolving complex and a large number of cofactors. It forms dimeric complexes.

It is found in the plastid. The protein resides in the chloroplast thylakoid membrane. In terms of biological role, one of the components of the core complex of photosystem II (PSII). PSII is a light-driven water:plastoquinone oxidoreductase that uses light energy to abstract electrons from H(2)O, generating O(2) and a proton gradient subsequently used for ATP formation. It consists of a core antenna complex that captures photons, and an electron transfer chain that converts photonic excitation into a charge separation. This Spinacia oleracea (Spinach) protein is Photosystem II reaction center protein J.